We begin with the raw amino-acid sequence, 205 residues long: HTH-type transcriptional repressor KstR2 (205 aa).

Positions 10-70 (ASRRDELLQL…EVLRDFLDWL (61 aa)) constitute an HTH tetR-type domain. The segment at residues 33 to 52 (TVRDIADSAGILSGSLYHHF) is a DNA-binding region (H-T-H motif).

Homodimer.

Functionally, controls the expression of a small regulon that may play a role in the utilization of cholesterol. In Mycolicibacterium smegmatis (strain ATCC 700084 / mc(2)155) (Mycobacterium smegmatis), this protein is HTH-type transcriptional repressor KstR2 (kstR2).